The sequence spans 203 residues: N-(5'-phosphoribosyl)anthranilate isomerase (203 aa).

This sequence belongs to the TrpF family.

The enzyme catalyses N-(5-phospho-beta-D-ribosyl)anthranilate = 1-(2-carboxyphenylamino)-1-deoxy-D-ribulose 5-phosphate. It functions in the pathway amino-acid biosynthesis; L-tryptophan biosynthesis; L-tryptophan from chorismate: step 3/5. This chain is N-(5'-phosphoribosyl)anthranilate isomerase, found in Thermoanaerobacter sp. (strain X514).